We begin with the raw amino-acid sequence, 68 residues long: Negative regulatory protein YxlD (68 aa).

Transmembrane regions (helical) follow at residues 5–25 (EIIITVAACLIVLAQGIFLFI) and 37–57 (WGIVGLIQAPMPLICYYFFVI).

It localises to the cell membrane. Its function is as follows. Together with YxlE, is important for negative regulation of sigma Y activity, being the major negative regulator. In Bacillus subtilis (strain 168), this protein is Negative regulatory protein YxlD (yxlD).